Reading from the N-terminus, the 97-residue chain is Aspartyl/glutamyl-tRNA(Asn/Gln) amidotransferase subunit C (97 aa).

It belongs to the GatC family. In terms of assembly, heterotrimer of A, B and C subunits.

The enzyme catalyses L-glutamyl-tRNA(Gln) + L-glutamine + ATP + H2O = L-glutaminyl-tRNA(Gln) + L-glutamate + ADP + phosphate + H(+). The catalysed reaction is L-aspartyl-tRNA(Asn) + L-glutamine + ATP + H2O = L-asparaginyl-tRNA(Asn) + L-glutamate + ADP + phosphate + 2 H(+). Allows the formation of correctly charged Asn-tRNA(Asn) or Gln-tRNA(Gln) through the transamidation of misacylated Asp-tRNA(Asn) or Glu-tRNA(Gln) in organisms which lack either or both of asparaginyl-tRNA or glutaminyl-tRNA synthetases. The reaction takes place in the presence of glutamine and ATP through an activated phospho-Asp-tRNA(Asn) or phospho-Glu-tRNA(Gln). This Prochlorococcus marinus (strain SARG / CCMP1375 / SS120) protein is Aspartyl/glutamyl-tRNA(Asn/Gln) amidotransferase subunit C.